The primary structure comprises 323 residues: Acetyl esterase (323 aa).

The Involved in the stabilization of the negatively charged intermediate by the formation of the oxyanion hole motif lies at 91–93; it reads HGG. Catalysis depends on residues Ser165, Asp262, and His292.

The protein belongs to the 'GDXG' lipolytic enzyme family. As to quaternary structure, homodimer. Interacts with MalT and MelA.

It localises to the cytoplasm. In terms of biological role, displays esterase activity towards short chain fatty esters (acyl chain length of up to 8 carbons). Able to hydrolyze triacetylglycerol (triacetin) and tributyrylglycerol (tributyrin), but not trioleylglycerol (triolein) or cholesterol oleate. Negatively regulates MalT activity by antagonizing maltotriose binding. Inhibits MelA galactosidase activity. This is Acetyl esterase from Salmonella paratyphi A (strain ATCC 9150 / SARB42).